A 155-amino-acid chain; its full sequence is Transcriptional repressor NrdR (155 aa).

A zinc finger spans residues 3 to 34; it reads CPFCHAEETKVVDSRLVADGAQVRRRRECLEC. In terms of domain architecture, ATP-cone spans 49-139; the sequence is PLIIKRDGRR…VYKRFKDVSD (91 aa).

It belongs to the NrdR family. It depends on Zn(2+) as a cofactor.

In terms of biological role, negatively regulates transcription of bacterial ribonucleotide reductase nrd genes and operons by binding to NrdR-boxes. In Legionella pneumophila (strain Lens), this protein is Transcriptional repressor NrdR.